The primary structure comprises 295 residues: Farnesyl diphosphate synthase (295 aa).

Positions 46, 49, and 78 each coordinate isopentenyl diphosphate. Residues Asp85 and Asp91 each contribute to the Mg(2+) site. A (2E)-geranyl diphosphate-binding site is contributed by Arg96. Isopentenyl diphosphate is bound at residue Arg97. Positions 180, 181, 220, and 237 each coordinate (2E)-geranyl diphosphate.

Belongs to the FPP/GGPP synthase family. Requires Mg(2+) as cofactor.

Its subcellular location is the cytoplasm. It catalyses the reaction isopentenyl diphosphate + (2E)-geranyl diphosphate = (2E,6E)-farnesyl diphosphate + diphosphate. This chain is Farnesyl diphosphate synthase (ispA), found in Haemophilus influenzae (strain ATCC 51907 / DSM 11121 / KW20 / Rd).